Here is a 1191-residue protein sequence, read N- to C-terminus: Roquin-2 (1191 aa).

7 residues coordinate Zn(2+): Cys-14, Cys-17, Cys-33, His-35, Cys-38, Cys-50, and Asp-53. The RING-type; degenerate zinc finger occupies 14 to 54 (CPICYNEFDENVHKPISLGCSHTVCKTCLNKLHRKACPFDQ). Residues 91–170 (ENKHYEVAKK…RTVTELILQH (80 aa)) are HEPN-N. Residues 171–325 (QNPQQLSANL…SIIDKLQSPE (155 aa)) are ROQ. The HEPN-C stretch occupies residues 326 to 396 (SFAKSVQELT…GLVDFIQNYS (71 aa)). The C3H1-type zinc finger occupies 410 to 438 (KYKTSMCRDLRQQGGCPRGTNCTFAHSQE). Disordered regions lie at residues 528-576 (GANG…NSVP) and 644-680 (ESSLPPASMPYADHYSTFSPRDRMNSSPYQPPPPQPY). Residues 530 to 546 (NGQNAAGPSADSVTENK) are compositionally biased toward polar residues. A Phosphoserine modification is found at Ser-549. Residues 554–576 (PVSNVAATSAGPSNVGTELNSVP) are compositionally biased toward polar residues. 3 positions are modified to phosphoserine: Ser-808, Ser-983, and Ser-1119.

As to quaternary structure, interacts with EDC4. Interacts with CCR4-NOT deadenylase complex. Interacts with MAP3K5; the interaction is probably stimulus-dependent. Post-translationally, proteolytically cleaved after Arg-509 and Arg-585 by MALT1 in activated CD4(+) T cells; cleavage at Arg-509 and Arg-585 is critical for promoting RC3H1 degradation in response to T-cell receptor (TCR) stimulation, and hence is necessary for prolonging the stability of a set of mRNAs controlling Th17 cell differentiation. As to expression, expressed in spleen, testis, ovary and small intestine.

The protein resides in the cytoplasm. It is found in the P-body. The enzyme catalyses S-ubiquitinyl-[E2 ubiquitin-conjugating enzyme]-L-cysteine + [acceptor protein]-L-lysine = [E2 ubiquitin-conjugating enzyme]-L-cysteine + N(6)-ubiquitinyl-[acceptor protein]-L-lysine.. It functions in the pathway protein modification; protein ubiquitination. Binding to dsRNA, but not CDE RNA, crosstalks with the E3 ubiquitin ligase activity and may inhibit ubiquitination. In terms of biological role, post-transcriptional repressor of mRNAs containing a conserved stem loop motif, called constitutive decay element (CDE), which is often located in the 3'-UTR, as in HMGXB3, ICOS, IER3, NFKBID, NFKBIZ, PPP1R10, TNF and in many more mRNAs. Binds to CDE and promotes mRNA deadenylation and degradation. This process does not involve miRNAs. In follicular helper T (Tfh) cells, represses of ICOS and TNFRSF4 expression, thus preventing spontaneous Tfh cell differentiation, germinal center B-cell differentiation in the absence of immunization and autoimmunity. In resting or LPS-stimulated macrophages, controls inflammation by suppressing TNF expression. Also recognizes CDE in its own mRNA and in that of paralogous RC3H1, possibly leading to feedback loop regulation. miRNA-binding protein that regulates microRNA homeostasis. Enhances DICER-mediated processing of pre-MIR146a but reduces mature MIR146a levels through an increase of 3' end uridylation. Both inhibits ICOS mRNA expression and they may act together to exert the suppression. Acts as a ubiquitin E3 ligase. Pairs with E2 enzymes UBE2B, UBE2D2, UBE2E2, UBE2E3, UBE2G2, UBE2K and UBE2Q2 and produces polyubiquitin chains. Shows the strongest activity when paired with UBE2N:UBE2V1 or UBE2N:UBE2V2 E2 complexes and generate both short and long polyubiquitin chains. Involved in the ubiquitination of MAP3K5. Able to interact with double-stranded RNA (dsRNA). The polypeptide is Roquin-2 (RC3H2) (Homo sapiens (Human)).